A 398-amino-acid polypeptide reads, in one-letter code: 4-hydroxy-3-methylbut-2-enyl diphosphate reductase (398 aa).

A [4Fe-4S] cluster-binding site is contributed by C66. H96 serves as a coordination point for (2E)-4-hydroxy-3-methylbut-2-enyl diphosphate. Dimethylallyl diphosphate is bound at residue H96. H96 lines the isopentenyl diphosphate pocket. C157 contributes to the [4Fe-4S] cluster binding site. H185 serves as a coordination point for (2E)-4-hydroxy-3-methylbut-2-enyl diphosphate. Dimethylallyl diphosphate is bound at residue H185. An isopentenyl diphosphate-binding site is contributed by H185. The Proton donor role is filled by E187. Position 250 (T250) interacts with (2E)-4-hydroxy-3-methylbut-2-enyl diphosphate. Residue C288 coordinates [4Fe-4S] cluster. 4 residues coordinate (2E)-4-hydroxy-3-methylbut-2-enyl diphosphate: S317, S318, N319, and S379. Dimethylallyl diphosphate is bound by residues S317, S318, N319, and S379. Isopentenyl diphosphate is bound by residues S317, S318, N319, and S379.

It belongs to the IspH family. Requires [4Fe-4S] cluster as cofactor.

It carries out the reaction isopentenyl diphosphate + 2 oxidized [2Fe-2S]-[ferredoxin] + H2O = (2E)-4-hydroxy-3-methylbut-2-enyl diphosphate + 2 reduced [2Fe-2S]-[ferredoxin] + 2 H(+). The enzyme catalyses dimethylallyl diphosphate + 2 oxidized [2Fe-2S]-[ferredoxin] + H2O = (2E)-4-hydroxy-3-methylbut-2-enyl diphosphate + 2 reduced [2Fe-2S]-[ferredoxin] + 2 H(+). Its pathway is isoprenoid biosynthesis; dimethylallyl diphosphate biosynthesis; dimethylallyl diphosphate from (2E)-4-hydroxy-3-methylbutenyl diphosphate: step 1/1. It functions in the pathway isoprenoid biosynthesis; isopentenyl diphosphate biosynthesis via DXP pathway; isopentenyl diphosphate from 1-deoxy-D-xylulose 5-phosphate: step 6/6. Catalyzes the conversion of 1-hydroxy-2-methyl-2-(E)-butenyl 4-diphosphate (HMBPP) into a mixture of isopentenyl diphosphate (IPP) and dimethylallyl diphosphate (DMAPP). Acts in the terminal step of the DOXP/MEP pathway for isoprenoid precursor biosynthesis. This chain is 4-hydroxy-3-methylbut-2-enyl diphosphate reductase, found in Synechococcus sp. (strain CC9311).